The following is a 218-amino-acid chain: MEWSDVFHEITTRHDFAAMHDFLEKEYTTEIVYPDRKNIYQAFDLTPFEQVKVVILGQDPYHGPNQAHGLAFSVQPDAKFPPSLRNMYKELQDDVGCIRKSPHLQDWAREGVLLLNTVLTVRQGEAHSHKNIGWETFTDEVIQAVSEHLTHVVFILWGKPAQQKIKLIDTSKHHIIQSPHPSPLSAYRGFFGSKPYSQANTYLQANGKQPVNWCESEV.

Asp-59 acts as the Proton acceptor in catalysis.

The protein belongs to the uracil-DNA glycosylase (UDG) superfamily. UNG family.

The protein localises to the cytoplasm. It carries out the reaction Hydrolyzes single-stranded DNA or mismatched double-stranded DNA and polynucleotides, releasing free uracil.. Functionally, excises uracil residues from the DNA which can arise as a result of misincorporation of dUMP residues by DNA polymerase or due to deamination of cytosine. This Staphylococcus saprophyticus subsp. saprophyticus (strain ATCC 15305 / DSM 20229 / NCIMB 8711 / NCTC 7292 / S-41) protein is Uracil-DNA glycosylase.